The chain runs to 207 residues: Elongation factor 1-beta (207 aa).

An N-acetylalanine modification is found at alanine 2. The disordered stretch occupies residues 70–96; the sequence is FPGIPTSASKEEDDDVDLFGSDEEDEE. Acidic residues predominate over residues 80-96; the sequence is EEDDDVDLFGSDEEDEE. Serine 90 carries the post-translational modification Phosphoserine; by CK2.

Belongs to the EF-1-beta/EF-1-delta family. As to quaternary structure, EF-1 is composed of 4 subunits: alpha, beta, delta, and gamma. In terms of processing, phosphorylation affects the GDP/GTP exchange rate.

EF-1-beta and EF-1-delta stimulate the exchange of GDP bound to EF-1-alpha to GTP. The chain is Elongation factor 1-beta from Artemia salina (Brine shrimp).